The chain runs to 221 residues: Protein Thf1 (221 aa).

The stretch at 174 to 213 (TKERVEKDVNLYKSSLDKIEKALELIEMNIKDEKRRNKER) forms a coiled coil.

The protein belongs to the THF1 family.

Functionally, may be involved in photosynthetic membrane biogenesis. This is Protein Thf1 from Prochlorococcus marinus (strain MIT 9211).